Reading from the N-terminus, the 429-residue chain is Glutamate-1-semialdehyde 2,1-aminomutase (429 aa).

An N6-(pyridoxal phosphate)lysine modification is found at K267.

The protein belongs to the class-III pyridoxal-phosphate-dependent aminotransferase family. HemL subfamily. In terms of assembly, homodimer. It depends on pyridoxal 5'-phosphate as a cofactor.

The protein resides in the cytoplasm. It catalyses the reaction (S)-4-amino-5-oxopentanoate = 5-aminolevulinate. It functions in the pathway porphyrin-containing compound metabolism; protoporphyrin-IX biosynthesis; 5-aminolevulinate from L-glutamyl-tRNA(Glu): step 2/2. This is Glutamate-1-semialdehyde 2,1-aminomutase from Stenotrophomonas maltophilia (strain K279a).